Reading from the N-terminus, the 488-residue chain is Protein nucleotidyltransferase YdiU (488 aa).

ATP-binding residues include glycine 90, glycine 92, arginine 93, lysine 113, aspartate 125, glycine 126, arginine 176, and arginine 183. Aspartate 252 (proton acceptor) is an active-site residue. 2 residues coordinate Mg(2+): asparagine 253 and aspartate 262. ATP is bound at residue aspartate 262.

The protein belongs to the SELO family. It depends on Mg(2+) as a cofactor. The cofactor is Mn(2+).

It catalyses the reaction L-seryl-[protein] + ATP = 3-O-(5'-adenylyl)-L-seryl-[protein] + diphosphate. The enzyme catalyses L-threonyl-[protein] + ATP = 3-O-(5'-adenylyl)-L-threonyl-[protein] + diphosphate. It carries out the reaction L-tyrosyl-[protein] + ATP = O-(5'-adenylyl)-L-tyrosyl-[protein] + diphosphate. The catalysed reaction is L-histidyl-[protein] + UTP = N(tele)-(5'-uridylyl)-L-histidyl-[protein] + diphosphate. It catalyses the reaction L-seryl-[protein] + UTP = O-(5'-uridylyl)-L-seryl-[protein] + diphosphate. The enzyme catalyses L-tyrosyl-[protein] + UTP = O-(5'-uridylyl)-L-tyrosyl-[protein] + diphosphate. Its function is as follows. Nucleotidyltransferase involved in the post-translational modification of proteins. It can catalyze the addition of adenosine monophosphate (AMP) or uridine monophosphate (UMP) to a protein, resulting in modifications known as AMPylation and UMPylation. This chain is Protein nucleotidyltransferase YdiU, found in Thiobacillus denitrificans (strain ATCC 25259 / T1).